The primary structure comprises 218 residues: Cytidylate kinase (218 aa).

Position 7-15 (7-15 (GPSASGKSS)) interacts with ATP.

The protein belongs to the cytidylate kinase family. Type 1 subfamily.

Its subcellular location is the cytoplasm. It carries out the reaction CMP + ATP = CDP + ADP. The enzyme catalyses dCMP + ATP = dCDP + ADP. The sequence is that of Cytidylate kinase from Borrelia hermsii (strain HS1 / DAH).